Consider the following 527-residue polypeptide: MSYPLEEVNKRRTFAIISHPDAGKTTITEKVLLYGNAIQTAGSVKGKGSAAHAKSDWMEMEKQRGISITTSVMQFPYNDCLVNLLDTPGHEDFSEDTYRTLTAVDSCLMVIDSAKGVEERTIKLMEVTRLRDTPIITFMNKLDRDIRDPIELLDEVENVLKIRCAPITWPIGCGKLFKGVYHLAKDETYLYQSGQGSTIQAVRVVKGLNNPELDVAVGDDLAQQLREELELVQGASNEFEQDAFIKGELTPVFFGTALGNFGVDHFLDGLTQWAPKPQSRQADTRTVESAEEKFSGFVFKIQANMDPKHRDRVAFMRVVSGKYEKGMKLKHVRIGKDVVISDALTFMAGDRAHAEEAYAGDIIGLHNHGTIQIGDTFTQGETLKFTGIPNFAPELFRRIRLKDPLKQKQLLKGLVQLSEEGAVQVFRPLLNNDLIVGAVGVLQFDVVVSRLKTEYNVEAIYENVNVATARWVECADEKKFEEFKRKNEQNLALDGGDNLTYIAPTMVNLNLAQERYPDVVFYKTREH.

The region spanning 9 to 278 is the tr-type G domain; it reads NKRRTFAIIS…GLTQWAPKPQ (270 aa). Residues 18–25, 86–90, and 140–143 each bind GTP; these read SHPDAGKT, DTPGH, and NKLD.

Belongs to the TRAFAC class translation factor GTPase superfamily. Classic translation factor GTPase family. PrfC subfamily.

It is found in the cytoplasm. Its function is as follows. Increases the formation of ribosomal termination complexes and stimulates activities of RF-1 and RF-2. It binds guanine nucleotides and has strong preference for UGA stop codons. It may interact directly with the ribosome. The stimulation of RF-1 and RF-2 is significantly reduced by GTP and GDP, but not by GMP. In Haemophilus influenzae (strain ATCC 51907 / DSM 11121 / KW20 / Rd), this protein is Peptide chain release factor 3 (prfC).